The sequence spans 322 residues: ATP-dependent 6-phosphofructokinase (322 aa).

Residue Gly11 coordinates ATP. 21-25 lines the ADP pocket; that stretch reads RAVAR. Residues 72–73 and 102–105 contribute to the ATP site; these read RY and GDGS. Asp103 is a binding site for Mg(2+). Substrate is bound at residue 125 to 127; sequence TID. Asp127 (proton acceptor) is an active-site residue. Arg154 serves as a coordination point for ADP. Residues Arg162 and 169 to 171 contribute to the substrate site; that span reads MGR. Residues 185 to 187 and 213 to 215 each bind ADP; these read GAD and KDY. Substrate contacts are provided by residues Glu222, Arg246, and 252-255; that span reads HVQR.

This sequence belongs to the phosphofructokinase type A (PFKA) family. ATP-dependent PFK group I subfamily. Prokaryotic clade 'B1' sub-subfamily. In terms of assembly, homotetramer. Mg(2+) serves as cofactor.

Its subcellular location is the cytoplasm. It catalyses the reaction beta-D-fructose 6-phosphate + ATP = beta-D-fructose 1,6-bisphosphate + ADP + H(+). Its pathway is carbohydrate degradation; glycolysis; D-glyceraldehyde 3-phosphate and glycerone phosphate from D-glucose: step 3/4. Allosterically activated by ADP and other diphosphonucleosides, and allosterically inhibited by phosphoenolpyruvate. Catalyzes the phosphorylation of D-fructose 6-phosphate to fructose 1,6-bisphosphate by ATP, the first committing step of glycolysis. The sequence is that of ATP-dependent 6-phosphofructokinase from Pediococcus pentosaceus (strain ATCC 25745 / CCUG 21536 / LMG 10740 / 183-1w).